The chain runs to 406 residues: Linalool 8-monooxygenase (406 aa).

C355 contributes to the heme binding site.

It belongs to the cytochrome P450 family. The cofactor is heme.

The enzyme catalyses linalool + 2 reduced [NADPH--hemoprotein reductase] + 2 O2 = (6E)-8-oxolinalool + 2 oxidized [NADPH--hemoprotein reductase] + 3 H2O + 2 H(+). Its pathway is terpene metabolism; linalool degradation. Functionally, catalyzes the 8-methyl hydroxylation of linalool. This Pseudomonas putida (Arthrobacter siderocapsulatus) protein is Linalool 8-monooxygenase (linC).